The chain runs to 313 residues: Ribosomal RNA small subunit methyltransferase H (313 aa).

S-adenosyl-L-methionine is bound by residues 35-37 (GGH), Asp-55, Phe-79, Asp-100, and Gln-107.

It belongs to the methyltransferase superfamily. RsmH family.

It is found in the cytoplasm. It carries out the reaction cytidine(1402) in 16S rRNA + S-adenosyl-L-methionine = N(4)-methylcytidine(1402) in 16S rRNA + S-adenosyl-L-homocysteine + H(+). Specifically methylates the N4 position of cytidine in position 1402 (C1402) of 16S rRNA. The protein is Ribosomal RNA small subunit methyltransferase H of Burkholderia ambifaria (strain MC40-6).